A 559-amino-acid polypeptide reads, in one-letter code: Malate synthase, glyoxysomal (559 aa).

The active-site Proton acceptor is the Arg-173. The Proton donor role is filled by Asp-459. The Microbody targeting signal motif lies at 557 to 559 (CKL).

The protein belongs to the malate synthase family.

It localises to the glyoxysome. The catalysed reaction is glyoxylate + acetyl-CoA + H2O = (S)-malate + CoA + H(+). It participates in carbohydrate metabolism; glyoxylate cycle; (S)-malate from isocitrate: step 2/2. In Zea mays (Maize), this protein is Malate synthase, glyoxysomal (LIP).